The sequence spans 752 residues: Endo-1,4-beta-xylanase 3 (752 aa).

The segment at 1-22 is disordered; sequence MEKNTNTNHTSDDNNDKNHTNE. Residues 10 to 22 show a composition bias toward basic and acidic residues; that stretch reads TSDDNNDKNHTNE. 2 consecutive CBM-cenC domains span residues 26-163 and 197-344; these read KIIL…EGPP and NIVE…VQGP. The region spanning 397–692 is the GH10 domain; the sequence is FPYIVKVKQT…NEAGKRFLEV (296 aa). The active-site Proton donor is E526. E627 acts as the Nucleophile in catalysis.

Belongs to the glycosyl hydrolase 10 (cellulase F) family. In terms of tissue distribution, confined to immature xylems.

It carries out the reaction Endohydrolysis of (1-&gt;4)-beta-D-xylosidic linkages in xylans.. It functions in the pathway glycan degradation; xylan degradation. Binds to and hydrolyzes insoluble and soluble xylan substrates. The polypeptide is Endo-1,4-beta-xylanase 3 (Arabidopsis thaliana (Mouse-ear cress)).